Consider the following 106-residue polypeptide: uncharacterized protein (106 aa).

This is an uncharacterized protein from Invertebrate iridescent virus 3 (IIV-3).